Here is a 365-residue protein sequence, read N- to C-terminus: Fructose-1,6-bisphosphatase class 1 2 (365 aa).

Residues glutamate 100, aspartate 122, leucine 124, and aspartate 125 each coordinate Mg(2+). Residues 125–128 (DGSS) and asparagine 221 each bind substrate. Glutamate 293 contributes to the Mg(2+) binding site.

Belongs to the FBPase class 1 family. In terms of assembly, homotetramer. Mg(2+) is required as a cofactor.

It localises to the cytoplasm. The catalysed reaction is beta-D-fructose 1,6-bisphosphate + H2O = beta-D-fructose 6-phosphate + phosphate. It participates in carbohydrate biosynthesis; gluconeogenesis. The chain is Fructose-1,6-bisphosphatase class 1 2 from Cupriavidus metallidurans (strain ATCC 43123 / DSM 2839 / NBRC 102507 / CH34) (Ralstonia metallidurans).